A 508-amino-acid polypeptide reads, in one-letter code: Phenylacetaldehyde synthase (508 aa).

L-phenylalanine contacts are provided by H203 and H318. The residue at position 319 (K319) is an N6-(pyridoxal phosphate)lysine. F348 provides a ligand contact to L-phenylalanine.

This sequence belongs to the group II decarboxylase family. Homotetramer. Pyridoxal 5'-phosphate is required as a cofactor.

The catalysed reaction is L-phenylalanine + O2 + H2O + H(+) = 2-phenylacetaldehyde + H2O2 + NH4(+) + CO2. Bifunctional enzyme that catalyzes the decarboxylation of L-phenylalanine to produce 2-phenylethylamine, which is then oxidized to form 2-phenylacetaldehyde, a constituent of floral scent in petals. 2-phenylacetaldehyde is a precursor of 2-phenylethanol, another constituent of floral scent in petals. The sequence is that of Phenylacetaldehyde synthase from Rosa hybrid cultivar.